The chain runs to 478 residues: Abscisate beta-glucosyltransferase (478 aa).

Catalysis depends on histidine 20, which acts as the Proton acceptor. An anthocyanidin is bound at residue histidine 20. The active-site Charge relay is aspartate 108. UDP-alpha-D-glucose contacts are provided by alanine 340, glutamine 342, histidine 357, tryptophan 360, asparagine 361, serine 362, and glutamate 365. Alanine 380 is a binding site for an anthocyanidin. The UDP-alpha-D-glucose site is built by glutamate 381 and glutamine 382.

This sequence belongs to the UDP-glycosyltransferase family.

The catalysed reaction is 2-cis-(+)-abscisate + UDP-alpha-D-glucose = beta-D-glucopyranosyl cis-(+)-abscisate + UDP. Functionally, glucosyltransferase involved in the catabolism of abscisic acid (ABA). Adds a glucosyl group at the C-1 position of ABA; (S)-2-trans-abscisate is a better substrate than the natural (+)-S-abscisate or its enantiomer (-)-R-abscisate. No activity with (-)-phaseic acid (PA), methylated-ABA or with other hormones such as jasmonate, zeatin, auxin (IAA) or gibberellin A3 (GA3). The protein is Abscisate beta-glucosyltransferase (AOG) of Phaseolus angularis (Azuki bean).